Reading from the N-terminus, the 36-residue chain is Potassium channel toxin alpha-KTx 16.5 (36 aa).

3 cysteine pairs are disulfide-bonded: C7-C28, C13-C33, and C17-C35. The tract at residues 26-33 is interaction with Ca(2+)-activated K(+) channels; that stretch reads GKCQNKQC.

The protein belongs to the short scorpion toxin superfamily. Potassium channel inhibitor family. Alpha-KTx 16 subfamily. As to expression, expressed by the venom gland.

The protein resides in the secreted. Augments responses to direct muscle stimulation probably by blocking calcium-activated potassium channels. The polypeptide is Potassium channel toxin alpha-KTx 16.5 (Leiurus hebraeus (Hebrew deathstalker scorpion)).